Consider the following 417-residue polypeptide: NADH-quinone oxidoreductase subunit D (417 aa).

The protein belongs to the complex I 49 kDa subunit family. NDH-1 is composed of 14 different subunits. Subunits NuoB, C, D, E, F, and G constitute the peripheral sector of the complex.

The protein resides in the cell inner membrane. The catalysed reaction is a quinone + NADH + 5 H(+)(in) = a quinol + NAD(+) + 4 H(+)(out). Its function is as follows. NDH-1 shuttles electrons from NADH, via FMN and iron-sulfur (Fe-S) centers, to quinones in the respiratory chain. The immediate electron acceptor for the enzyme in this species is believed to be ubiquinone. Couples the redox reaction to proton translocation (for every two electrons transferred, four hydrogen ions are translocated across the cytoplasmic membrane), and thus conserves the redox energy in a proton gradient. The polypeptide is NADH-quinone oxidoreductase subunit D (Legionella pneumophila subsp. pneumophila (strain Philadelphia 1 / ATCC 33152 / DSM 7513)).